Consider the following 43-residue polypeptide: Protein PsbN (43 aa).

A helical transmembrane segment spans residues 7–29 (IVIFVSSLLLGITTYSVYTAFGP).

It belongs to the PsbN family.

The protein localises to the plastid. Its subcellular location is the chloroplast thylakoid membrane. In terms of biological role, may play a role in photosystem I and II biogenesis. This Phaeodactylum tricornutum (strain CCAP 1055/1) protein is Protein PsbN.